We begin with the raw amino-acid sequence, 345 residues long: Heat-inducible transcription repressor HrcA (345 aa).

The protein belongs to the HrcA family.

In terms of biological role, negative regulator of class I heat shock genes (grpE-dnaK-dnaJ and groELS operons). Prevents heat-shock induction of these operons. The polypeptide is Heat-inducible transcription repressor HrcA (Corynebacterium diphtheriae (strain ATCC 700971 / NCTC 13129 / Biotype gravis)).